We begin with the raw amino-acid sequence, 383 residues long: Chorismate synthase (383 aa).

NADP(+)-binding residues include Arg39 and Arg45. FMN is bound by residues 128–130 (RAS), Gly291, 306–310 (KPIAT), and Arg332.

The protein belongs to the chorismate synthase family. Homotetramer. The cofactor is FMNH2.

It catalyses the reaction 5-O-(1-carboxyvinyl)-3-phosphoshikimate = chorismate + phosphate. Its pathway is metabolic intermediate biosynthesis; chorismate biosynthesis; chorismate from D-erythrose 4-phosphate and phosphoenolpyruvate: step 7/7. In terms of biological role, catalyzes the anti-1,4-elimination of the C-3 phosphate and the C-6 proR hydrogen from 5-enolpyruvylshikimate-3-phosphate (EPSP) to yield chorismate, which is the branch point compound that serves as the starting substrate for the three terminal pathways of aromatic amino acid biosynthesis. This reaction introduces a second double bond into the aromatic ring system. In Thermus thermophilus (strain ATCC BAA-163 / DSM 7039 / HB27), this protein is Chorismate synthase.